A 467-amino-acid polypeptide reads, in one-letter code: tRNA modification GTPase MnmE (467 aa).

Positions 27, 89, and 128 each coordinate (6S)-5-formyl-5,6,7,8-tetrahydrofolate. In terms of domain architecture, TrmE-type G spans 225–387 (GISMVIAGRP…LKQAIFTVVT (163 aa)). Residue N235 participates in K(+) binding. GTP-binding positions include 235–240 (NVGKSS), 254–260 (TSIAGTT), 279–282 (DTAG), and 368–370 (SAR). Residue S239 coordinates Mg(2+). Positions 254, 256, and 259 each coordinate K(+). Position 260 (T260) interacts with Mg(2+). Residue K467 participates in (6S)-5-formyl-5,6,7,8-tetrahydrofolate binding.

The protein belongs to the TRAFAC class TrmE-Era-EngA-EngB-Septin-like GTPase superfamily. TrmE GTPase family. Homodimer. Heterotetramer of two MnmE and two MnmG subunits. The cofactor is K(+).

The protein localises to the cytoplasm. Its function is as follows. Exhibits a very high intrinsic GTPase hydrolysis rate. Involved in the addition of a carboxymethylaminomethyl (cmnm) group at the wobble position (U34) of certain tRNAs, forming tRNA-cmnm(5)s(2)U34. The chain is tRNA modification GTPase MnmE from Desulfotalea psychrophila (strain LSv54 / DSM 12343).